The primary structure comprises 306 residues: ATP synthase gamma chain (306 aa).

The protein belongs to the ATPase gamma chain family. In terms of assembly, F-type ATPases have 2 components, CF(1) - the catalytic core - and CF(0) - the membrane proton channel. CF(1) has five subunits: alpha(3), beta(3), gamma(1), delta(1), epsilon(1). CF(0) has three main subunits: a, b and c.

It localises to the cell membrane. Its function is as follows. Produces ATP from ADP in the presence of a proton gradient across the membrane. The gamma chain is believed to be important in regulating ATPase activity and the flow of protons through the CF(0) complex. This Bifidobacterium animalis subsp. lactis (strain AD011) protein is ATP synthase gamma chain.